A 248-amino-acid chain; its full sequence is Triosephosphate isomerase (248 aa).

Residue N9–K11 participates in substrate binding. The active-site Electrophile is H95. E166 serves as the catalytic Proton acceptor. Residues G172, S210, and G231–G232 contribute to the substrate site.

This sequence belongs to the triosephosphate isomerase family. As to quaternary structure, homodimer.

The protein localises to the cytoplasm. It catalyses the reaction D-glyceraldehyde 3-phosphate = dihydroxyacetone phosphate. The protein operates within carbohydrate biosynthesis; gluconeogenesis. It participates in carbohydrate degradation; glycolysis; D-glyceraldehyde 3-phosphate from glycerone phosphate: step 1/1. Its function is as follows. Involved in the gluconeogenesis. Catalyzes stereospecifically the conversion of dihydroxyacetone phosphate (DHAP) to D-glyceraldehyde-3-phosphate (G3P). The sequence is that of Triosephosphate isomerase from Delftia acidovorans (strain DSM 14801 / SPH-1).